The sequence spans 620 residues: Translocator protein BipB (620 aa).

The interval 58–95 is disordered; that stretch reads QCDAQPAAHDARLDDRPALRAPQERDAPPLGASDTGSR. The span at 66-84 shows a compositional bias: basic and acidic residues; sequence HDARLDDRPALRAPQERDA. Residues 309–339 are a coiled coil; it reads EMQAKREAELQKKSDEYQAQVKKAEEMQKTM. 3 helical membrane-spanning segments follow: residues 355–375, 401–421, and 430–450; these read FAAAAFTGGASLALAAVGLAL, AILKPLMEMISSLITKALVAC, and LAGAILGAVVTGVALVAAAFV.

This sequence belongs to the SctE/SipB/YopB family.

It is found in the secreted. Its subcellular location is the host membrane. In terms of biological role, plays a role in the bacterium-induced formation of multinucleated giant cell (MNGC), which is formed after host cell fusion, as well as in the intercellular spreading of bacteria and in the induction of apoptosis in macrophages. May act in concert with other effector proteins to induce fusion of host cell membranes. The protein is Translocator protein BipB (bipB) of Burkholderia mallei (strain NCTC 10247).